The chain runs to 333 residues: Transcription termination factor MTERF6, chloroplastic/mitochondrial (333 aa).

It belongs to the mTERF family.

The protein localises to the plastid. It localises to the chloroplast. It is found in the mitochondrion. Functionally, transcription termination factor essential for chloroplast development. Required for maturation of 16S rRNA, 18S rRNA and 23S rRNA in the chloroplast. Binds to a specific region within the tRNA(Ile)(GAU) gene at a position adjacent to and downstream of the 16S rRNA gene. Required for the maturation of tRNA(Ile)(GAU). Binds to double-stranded DNA. This chain is Transcription termination factor MTERF6, chloroplastic/mitochondrial, found in Arabidopsis thaliana (Mouse-ear cress).